We begin with the raw amino-acid sequence, 56 residues long: Large ribosomal subunit protein bL33c (56 aa).

The protein belongs to the bacterial ribosomal protein bL33 family.

The protein resides in the plastid. The protein localises to the chloroplast. This chain is Large ribosomal subunit protein bL33c (rpl33), found in Guillardia theta (Cryptophyte).